The primary structure comprises 605 residues: Aspartate--tRNA(Asp/Asn) ligase (605 aa).

Glu176 provides a ligand contact to L-aspartate. Residues 200-203 are aspartate; it reads QQFK. Arg222 and His452 together coordinate L-aspartate. Residue 222–224 participates in ATP binding; it reads RDE. ATP is bound at residue Glu490. Position 497 (Arg497) interacts with L-aspartate. 542 to 545 lines the ATP pocket; it reads GIDR.

It belongs to the class-II aminoacyl-tRNA synthetase family. Type 1 subfamily. Homodimer.

It localises to the cytoplasm. The catalysed reaction is tRNA(Asx) + L-aspartate + ATP = L-aspartyl-tRNA(Asx) + AMP + diphosphate. Functionally, aspartyl-tRNA synthetase with relaxed tRNA specificity since it is able to aspartylate not only its cognate tRNA(Asp) but also tRNA(Asn). Reaction proceeds in two steps: L-aspartate is first activated by ATP to form Asp-AMP and then transferred to the acceptor end of tRNA(Asp/Asn). The polypeptide is Aspartate--tRNA(Asp/Asn) ligase (Rickettsia prowazekii (strain Madrid E)).